The chain runs to 249 residues: Polyhedrin (249 aa).

This sequence belongs to the polyhedrin family.

In terms of biological role, major component of the virus occlusion bodies, which are large proteinaceous structures (polyhedra), that protect the virus from the outside environment for extended periods until they are ingested by insect larvae. In Lepidoptera (butterflies and moths), this protein is Polyhedrin (PH).